Reading from the N-terminus, the 1068-residue chain is Disheveled-associated activator of morphogenesis 2 (1068 aa).

The region spanning 40–416 (SPIPNAEELN…QIVLQDERGV (377 aa)) is the GBD/FH3 domain. Residues 434-516 (MLINENEVKQ…LVAQLSELST (83 aa)) are a coiled coil. Residues 514-586 (LSTGPVSSPP…MGLPLPQDPY (73 aa)) are disordered. An FH1 domain is found at 518-594 (PVSSPPPPGG…PYPSSDVPLR (77 aa)). Over residues 540–572 (LPPPPPPLPFACCPPPPPPPLPPGGPPTPPGAP) the composition is skewed to pro residues. Positions 595 to 994 (KKRVPQPSHP…EERRARMEAM (400 aa)) constitute an FH2 domain. Phosphoserine is present on Ser1015. The DAD domain occupies 1016-1048 (SLEEGGEFDDLVSALRSGEVFDKDLCKLKRSRK).

This sequence belongs to the formin homology family. As to quaternary structure, interacts with DVL3. Interacts with INF2. In terms of tissue distribution, expressed in most tissues examined. Expressed in kidney glomeruli.

Key regulator of the Wnt signaling pathway, which is required for various processes during development, such as dorsal patterning, determination of left/right symmetry or myelination in the central nervous system. Acts downstream of Wnt ligands and upstream of beta-catenin (CTNNB1). Required for canonical Wnt signaling pathway during patterning in the dorsal spinal cord by promoting the aggregation of Disheveled (Dvl) complexes, thereby clustering and formation of Wnt receptor signalosomes and potentiating Wnt activity. During dorsal patterning of the spinal cord, inhibits oligodendrocytes differentiation via interaction with PIP5K1A. Also regulates non-canonical Wnt signaling pathway. Acts downstream of PITX2 in the developing gut and is required for left/right asymmetry within dorsal mesentery: affects mesenchymal condensation by lengthening cadherin-based junctions through WNT5A and non-canonical Wnt signaling, inducing polarized condensation in the left dorsal mesentery necessary to initiate gut rotation. Together with DAAM1, required for myocardial maturation and sarcomere assembly. Is a regulator of actin nucleation and elongation, filopodia formation and podocyte migration. The polypeptide is Disheveled-associated activator of morphogenesis 2 (Homo sapiens (Human)).